The following is a 101-amino-acid chain: MAKKSSVEKNNRRQRMVKNAAAKRARLKAIIADKTKPMEERFAATMKLAEMPRNSSATRIKNRCEISGRPHSVYRKTKMSRIAIRDFGSRGLIPGLVKSSW.

The span at Met1–Asn11 shows a compositional bias: basic and acidic residues. The tract at residues Met1 to Ala22 is disordered. Residues Arg12–Ala22 are compositionally biased toward basic residues.

This sequence belongs to the universal ribosomal protein uS14 family. Part of the 30S ribosomal subunit. Contacts proteins S3 and S10.

In terms of biological role, binds 16S rRNA, required for the assembly of 30S particles and may also be responsible for determining the conformation of the 16S rRNA at the A site. This is Small ribosomal subunit protein uS14 from Afipia carboxidovorans (strain ATCC 49405 / DSM 1227 / KCTC 32145 / OM5) (Oligotropha carboxidovorans).